Here is a 462-residue protein sequence, read N- to C-terminus: ATP synthase subunit beta (462 aa).

Position 152–159 (152–159 (GGAGVGKT)) interacts with ATP.

Belongs to the ATPase alpha/beta chains family. F-type ATPases have 2 components, CF(1) - the catalytic core - and CF(0) - the membrane proton channel. CF(1) has five subunits: alpha(3), beta(3), gamma(1), delta(1), epsilon(1). CF(0) has three main subunits: a(1), b(2) and c(9-12). The alpha and beta chains form an alternating ring which encloses part of the gamma chain. CF(1) is attached to CF(0) by a central stalk formed by the gamma and epsilon chains, while a peripheral stalk is formed by the delta and b chains.

It localises to the cell inner membrane. The catalysed reaction is ATP + H2O + 4 H(+)(in) = ADP + phosphate + 5 H(+)(out). Its function is as follows. Produces ATP from ADP in the presence of a proton gradient across the membrane. The catalytic sites are hosted primarily by the beta subunits. The sequence is that of ATP synthase subunit beta from Aeromonas hydrophila subsp. hydrophila (strain ATCC 7966 / DSM 30187 / BCRC 13018 / CCUG 14551 / JCM 1027 / KCTC 2358 / NCIMB 9240 / NCTC 8049).